Reading from the N-terminus, the 92-residue chain is Acylphosphatase (92 aa).

One can recognise an Acylphosphatase-like domain in the interval 5–92 (RVHIIVSGLV…TSCREFRILT (88 aa)). Catalysis depends on residues arginine 20 and asparagine 38.

The protein belongs to the acylphosphatase family.

The catalysed reaction is an acyl phosphate + H2O = a carboxylate + phosphate + H(+). This chain is Acylphosphatase (acyP), found in Chlorobaculum tepidum (strain ATCC 49652 / DSM 12025 / NBRC 103806 / TLS) (Chlorobium tepidum).